The chain runs to 791 residues: Probable phosphoketolase (791 aa).

It belongs to the XFP family. The cofactor is thiamine diphosphate.

This is Probable phosphoketolase from Pseudomonas putida (strain ATCC 700007 / DSM 6899 / JCM 31910 / BCRC 17059 / LMG 24140 / F1).